Reading from the N-terminus, the 303-residue chain is Acidic endochitinase WIN6.2B (303 aa).

Positions 1-21 (MSVWAFAFFSLFLSLSVRGSA) are cleaved as a signal peptide. The Chitin-binding type-1 domain maps to 22–62 (EQCGQQAGDALCPGGLCCSSYGWCGTTADYCGDGCQSQCDG). 4 disulfides stabilise this stretch: Cys24-Cys39, Cys33-Cys45, Cys38-Cys52, and Cys56-Cys60. Residues 82–303 (DGYLSDIIPE…YGLLGLKDTM (222 aa)) form a chitinase region. Glu150 serves as the catalytic Proton donor. Cys253 and Cys286 form a disulfide bridge.

Belongs to the glycosyl hydrolase 19 family. Chitinase class I subfamily.

It carries out the reaction Random endo-hydrolysis of N-acetyl-beta-D-glucosaminide (1-&gt;4)-beta-linkages in chitin and chitodextrins.. In terms of biological role, defense against chitin-containing fungal pathogens. The protein is Acidic endochitinase WIN6.2B of Populus trichocarpa (Western balsam poplar).